The following is a 132-amino-acid chain: Small ribosomal subunit protein uS8 (132 aa).

The protein belongs to the universal ribosomal protein uS8 family. In terms of assembly, part of the 30S ribosomal subunit. Contacts proteins S5 and S12.

Functionally, one of the primary rRNA binding proteins, it binds directly to 16S rRNA central domain where it helps coordinate assembly of the platform of the 30S subunit. This Caldicellulosiruptor bescii (strain ATCC BAA-1888 / DSM 6725 / KCTC 15123 / Z-1320) (Anaerocellum thermophilum) protein is Small ribosomal subunit protein uS8.